A 207-amino-acid polypeptide reads, in one-letter code: Guanylate kinase (207 aa).

A Guanylate kinase-like domain is found at 4–184; the sequence is GTLYIVSAPS…ALSDLKTIIR (181 aa). Residue 11-18 participates in ATP binding; that stretch reads APSGAGKS.

Belongs to the guanylate kinase family.

Its subcellular location is the cytoplasm. The catalysed reaction is GMP + ATP = GDP + ADP. Its function is as follows. Essential for recycling GMP and indirectly, cGMP. The sequence is that of Guanylate kinase from Yersinia pestis bv. Antiqua (strain Antiqua).